We begin with the raw amino-acid sequence, 175 residues long: Large ribosomal subunit protein uL16 (175 aa).

Belongs to the universal ribosomal protein uL16 family.

The polypeptide is Large ribosomal subunit protein uL16 (Caldivirga maquilingensis (strain ATCC 700844 / DSM 13496 / JCM 10307 / IC-167)).